The primary structure comprises 1006 residues: Probable protein phosphatase DDB_G0279461 (1006 aa).

Polar residues predominate over residues 1–12 (MMVPSLSTSISS). 7 disordered regions span residues 1-119 (MMVP…NNKE), 146-188 (SHAS…RSNS), 214-269 (SSED…NGIR), 312-387 (DAES…PPNQ), 459-513 (NINN…NNIQ), 525-563 (DYNI…NSKF), and 604-642 (GSIP…TSAS). Residues 59 to 69 (NEEEGTADNEL) show a composition bias toward acidic residues. The stretch at 65 to 122 (ADNELESLMSLVNDNNNNNNNTSGIDDDNNNDIDDNNNNNNNNNNNNNNNNNNKEGLN) forms a coiled coil. Low complexity predominate over residues 77-88 (NDNNNNNNNTSG). Over residues 89–99 (IDDDNNNDIDD) the composition is skewed to acidic residues. Positions 100 to 117 (NNNNNNNNNNNNNNNNNN) are enriched in low complexity. A compositionally biased stretch (polar residues) spans 146-158 (SHASVSNQSSNGS). Low complexity-rich tracts occupy residues 220–234 (SCHN…NKNN), 244–254 (NINNNNNNNCN), and 316–387 (NYNN…PPNQ). Positions 450-516 (KIDNLNKNIN…NNNNNIQDIQ (67 aa)) form a coiled coil. Polar residues predominate over residues 466–481 (TDSQQPLPSIDVNFSH). Residues 482–511 (NNNNNNNDNDNNNNNNNNNNNNNNNNNNNN) are compositionally biased toward low complexity. Residues 525–538 (DYNIQEGNDINNDN) are compositionally biased toward polar residues. Composition is skewed to low complexity over residues 552 to 561 (SSNNNNNNNS) and 613 to 639 (NNNN…TTTT). Residues 744-1005 (DINKRGLKRA…DNISIIVVTL (262 aa)) form the PPM-type phosphatase domain. Mn(2+)-binding residues include aspartate 784, glycine 785, aspartate 956, and aspartate 996.

It in the C-terminal section; belongs to the PP2C family. The cofactor is Mg(2+). It depends on Mn(2+) as a cofactor.

The catalysed reaction is O-phospho-L-seryl-[protein] + H2O = L-seryl-[protein] + phosphate. The enzyme catalyses O-phospho-L-threonyl-[protein] + H2O = L-threonyl-[protein] + phosphate. The protein is Probable protein phosphatase DDB_G0279461 of Dictyostelium discoideum (Social amoeba).